The following is a 483-amino-acid chain: UDP-N-acetylmuramate--L-alanine ligase (483 aa).

Residue Gly-112–Thr-118 coordinates ATP.

Belongs to the MurCDEF family.

The protein localises to the cytoplasm. The catalysed reaction is UDP-N-acetyl-alpha-D-muramate + L-alanine + ATP = UDP-N-acetyl-alpha-D-muramoyl-L-alanine + ADP + phosphate + H(+). The protein operates within cell wall biogenesis; peptidoglycan biosynthesis. Its function is as follows. Cell wall formation. The polypeptide is UDP-N-acetylmuramate--L-alanine ligase (Ralstonia pickettii (strain 12J)).